The primary structure comprises 731 residues: Cucumisin (731 aa).

The first 22 residues, 1–22 (MSSSLIFKLFFFSLFFSNRLAS), serve as a signal peptide directing secretion. Positions 23 to 110 (RLDSDDDGKN…VFLNEMNELH (88 aa)) are cleaved as a propeptide — activation peptide. One can recognise an Inhibitor I9 domain in the interval 34–110 (YIVYMGRKLE…VFLNEMNELH (77 aa)). In terms of domain architecture, Peptidase S8 spans 114-584 (SWDFLGFPLT…SGHVNPLKAV (471 aa)). D140 serves as the catalytic Charge relay system. A disulfide bond links C166 and C174. The active-site Charge relay system is the H204. 2 disulfides stabilise this stretch: C245/C250 and C380/C397. N-linked (GlcNAc...) asparagine glycosylation is present at N466. Residue S525 is the Charge relay system of the active site. Positions 616 to 731 (GDYSACTSGN…RSPITITSLV (116 aa)) are excised as a propeptide. The N-linked (GlcNAc...) asparagine glycan is linked to N652.

The protein belongs to the peptidase S8 family. Monomer and dimer. In terms of processing, the C-terminal propeptide is autocleaved. In terms of tissue distribution, specifically expressed in fruits. Expressed in sarcocarp (at protein level).

The protein resides in the secreted. It carries out the reaction Hydrolysis of proteins with broad specificity.. This chain is Cucumisin, found in Cucumis melo (Muskmelon).